A 260-amino-acid chain; its full sequence is Flagellar basal-body rod protein FlgG (260 aa).

Belongs to the flagella basal body rod proteins family. In terms of assembly, the basal body constitutes a major portion of the flagellar organelle and consists of four rings (L,P,S, and M) mounted on a central rod. The rod consists of about 26 subunits of FlgG in the distal portion, and FlgB, FlgC and FlgF are thought to build up the proximal portion of the rod with about 6 subunits each.

It is found in the bacterial flagellum basal body. The chain is Flagellar basal-body rod protein FlgG (flgG) from Buchnera aphidicola subsp. Schizaphis graminum (strain Sg).